A 96-amino-acid polypeptide reads, in one-letter code: Large ribosomal subunit protein uL23cz (96 aa).

It belongs to the universal ribosomal protein uL23 family. In terms of assembly, part of the 50S ribosomal subunit.

Its subcellular location is the plastid. The protein resides in the chloroplast. In terms of biological role, binds to 23S rRNA. The chain is Large ribosomal subunit protein uL23cz (rpl23-A) from Sorghum bicolor (Sorghum).